We begin with the raw amino-acid sequence, 293 residues long: Pyridoxal 5'-phosphate synthase subunit PdxS (293 aa).

Residue aspartate 23 participates in D-ribose 5-phosphate binding. The Schiff-base intermediate with D-ribose 5-phosphate role is filled by lysine 80. Glycine 152 provides a ligand contact to D-ribose 5-phosphate. Arginine 164 is a binding site for D-glyceraldehyde 3-phosphate. Residues glycine 213 and 234 to 235 (GS) each bind D-ribose 5-phosphate.

It belongs to the PdxS/SNZ family. In terms of assembly, in the presence of PdxT, forms a dodecamer of heterodimers.

The enzyme catalyses aldehydo-D-ribose 5-phosphate + D-glyceraldehyde 3-phosphate + L-glutamine = pyridoxal 5'-phosphate + L-glutamate + phosphate + 3 H2O + H(+). It functions in the pathway cofactor biosynthesis; pyridoxal 5'-phosphate biosynthesis. Catalyzes the formation of pyridoxal 5'-phosphate from ribose 5-phosphate (RBP), glyceraldehyde 3-phosphate (G3P) and ammonia. The ammonia is provided by the PdxT subunit. Can also use ribulose 5-phosphate and dihydroxyacetone phosphate as substrates, resulting from enzyme-catalyzed isomerization of RBP and G3P, respectively. The polypeptide is Pyridoxal 5'-phosphate synthase subunit PdxS (Thermus thermophilus (strain ATCC BAA-163 / DSM 7039 / HB27)).